The chain runs to 185 residues: Translation initiation factor IF-3 (185 aa).

It belongs to the IF-3 family. As to quaternary structure, monomer.

The protein resides in the cytoplasm. In terms of biological role, IF-3 binds to the 30S ribosomal subunit and shifts the equilibrium between 70S ribosomes and their 50S and 30S subunits in favor of the free subunits, thus enhancing the availability of 30S subunits on which protein synthesis initiation begins. This is Translation initiation factor IF-3 from Rickettsia felis (strain ATCC VR-1525 / URRWXCal2) (Rickettsia azadi).